Here is a 313-residue protein sequence, read N- to C-terminus: Porphobilinogen deaminase 2 (313 aa).

C246 carries the post-translational modification S-(dipyrrolylmethanemethyl)cysteine.

It belongs to the HMBS family. Monomer. Requires dipyrromethane as cofactor.

The catalysed reaction is 4 porphobilinogen + H2O = hydroxymethylbilane + 4 NH4(+). Its pathway is porphyrin-containing compound metabolism; protoporphyrin-IX biosynthesis; coproporphyrinogen-III from 5-aminolevulinate: step 2/4. Functionally, tetrapolymerization of the monopyrrole PBG into the hydroxymethylbilane pre-uroporphyrinogen in several discrete steps. The sequence is that of Porphobilinogen deaminase 2 (hemC2) from Streptomyces coelicolor (strain ATCC BAA-471 / A3(2) / M145).